The chain runs to 293 residues: Acetyl-coenzyme A carboxylase carboxyl transferase subunit beta (293 aa).

In terms of domain architecture, CoA carboxyltransferase N-terminal spans 29–293; that stretch reads LWSKCPECGQ…GCKPMELTSA (265 aa). C33, C36, C52, and C55 together coordinate Zn(2+). The segment at 33-55 adopts a C4-type zinc-finger fold; the sequence is CPECGQVVYLKDLKLNASVCANC.

It belongs to the AccD/PCCB family. In terms of assembly, acetyl-CoA carboxylase is a heterohexamer composed of biotin carboxyl carrier protein (AccB), biotin carboxylase (AccC) and two subunits each of ACCase subunit alpha (AccA) and ACCase subunit beta (AccD). Zn(2+) serves as cofactor.

It is found in the cytoplasm. The enzyme catalyses N(6)-carboxybiotinyl-L-lysyl-[protein] + acetyl-CoA = N(6)-biotinyl-L-lysyl-[protein] + malonyl-CoA. It participates in lipid metabolism; malonyl-CoA biosynthesis; malonyl-CoA from acetyl-CoA: step 1/1. In terms of biological role, component of the acetyl coenzyme A carboxylase (ACC) complex. Biotin carboxylase (BC) catalyzes the carboxylation of biotin on its carrier protein (BCCP) and then the CO(2) group is transferred by the transcarboxylase to acetyl-CoA to form malonyl-CoA. In Synechococcus sp. (strain CC9605), this protein is Acetyl-coenzyme A carboxylase carboxyl transferase subunit beta.